A 735-amino-acid polypeptide reads, in one-letter code: Photosystem I P700 chlorophyll a apoprotein A2 (735 aa).

A run of 8 helical transmembrane segments spans residues 46 to 69 (IFAS…FYVS), 135 to 158 (LSTA…IHGY), 176 to 200 (LNHH…HVAI), 274 to 292 (IAHH…GHMY), 329 to 352 (LNLQ…QHMY), 368 to 394 (AALY…IFLV), 416 to 438 (VIIS…LYVH), and 521 to 539 (FLVH…LILV). [4Fe-4S] cluster contacts are provided by Cys-563 and Cys-572. 2 helical membrane-spanning segments follow: residues 579–600 (AFYL…YWHW) and 647–669 (LSVW…MFLI). Residues His-658, Met-666, and Tyr-674 each coordinate chlorophyll a. Residue Trp-675 participates in phylloquinone binding. A helical transmembrane segment spans residues 708 to 728 (FVGLIHFTVGYILTYAAFLIA).

The protein belongs to the PsaA/PsaB family. The PsaA/B heterodimer binds the P700 chlorophyll special pair and subsequent electron acceptors. PSI consists of a core antenna complex that captures photons, and an electron transfer chain that converts photonic excitation into a charge separation. The eukaryotic PSI reaction center is composed of at least 11 subunits. It depends on P700 is a chlorophyll a/chlorophyll a' dimer, A0 is one or more chlorophyll a, A1 is one or both phylloquinones and FX is a shared 4Fe-4S iron-sulfur center. as a cofactor.

The protein resides in the plastid. It localises to the chloroplast thylakoid membrane. It catalyses the reaction reduced [plastocyanin] + hnu + oxidized [2Fe-2S]-[ferredoxin] = oxidized [plastocyanin] + reduced [2Fe-2S]-[ferredoxin]. Its function is as follows. PsaA and PsaB bind P700, the primary electron donor of photosystem I (PSI), as well as the electron acceptors A0, A1 and FX. PSI is a plastocyanin/cytochrome c6-ferredoxin oxidoreductase, converting photonic excitation into a charge separation, which transfers an electron from the donor P700 chlorophyll pair to the spectroscopically characterized acceptors A0, A1, FX, FA and FB in turn. Oxidized P700 is reduced on the lumenal side of the thylakoid membrane by plastocyanin or cytochrome c6. The protein is Photosystem I P700 chlorophyll a apoprotein A2 of Bigelowiella natans (Pedinomonas minutissima).